Here is a 760-residue protein sequence, read N- to C-terminus: Catalase-peroxidase (760 aa).

The interval 1 to 22 is disordered; it reads MSQGECPVKKVPNVAGSGTRNT. Positions 93-242 form a cross-link, tryptophyl-tyrosyl-methioninium (Trp-Tyr) (with M-268); the sequence is WHSAGTYRVT…LAAAHMGLIY (150 aa). H94 (proton acceptor) is an active-site residue. The interval 206 to 226 is disordered; it reads KGEGIMDGDQHKTDKSEPHTS. Basic and acidic residues predominate over residues 213 to 226; that stretch reads GDQHKTDKSEPHTS. The tryptophyl-tyrosyl-methioninium (Tyr-Met) (with W-93) cross-link spans 242–268; that stretch reads YVNPEGPEGIPDPVAAAHDIRTTFGRM. Heme b is bound at residue H283.

It belongs to the peroxidase family. Peroxidase/catalase subfamily. As to quaternary structure, homodimer or homotetramer. Requires heme b as cofactor. Formation of the three residue Trp-Tyr-Met cross-link is important for the catalase, but not the peroxidase activity of the enzyme.

It localises to the cytoplasm. It carries out the reaction H2O2 + AH2 = A + 2 H2O. The enzyme catalyses 2 H2O2 = O2 + 2 H2O. In terms of biological role, bifunctional enzyme with both catalase and broad-spectrum peroxidase activity. The chain is Catalase-peroxidase from Pyrenophora tritici-repentis (strain Pt-1C-BFP) (Wheat tan spot fungus).